The primary structure comprises 163 residues: UPF0260 protein GOX1406 (163 aa).

It belongs to the UPF0260 family.

The polypeptide is UPF0260 protein GOX1406 (Gluconobacter oxydans (strain 621H) (Gluconobacter suboxydans)).